The chain runs to 2021 residues: MSGRQRTLFQTWGPSLVRGSGDSGCGQPRSPAMAEALPEEDDEVLLVAAYEAERQLDPGDGGFCAAAGALWIYPTNCPVRDYQLDISRSALFCNTLVCLPTGLGKTFIAAVVMYNFYRWFPSGKVVFMAPTKPLVTQQMEACFHVMGIPQSHMAEMTGSTQAVNRKEIWSSRRVLFLTPQVMVNDLTRGAVPATHVKCLVVDEAHKALGNYAYCQVVRELVKYTTHFRILALSATPGSDIKAVQQVITNLLIGKIELRSEESPDILPYSHERRVEKLVVPLGEELGAIQKTYIQILETFASSLIHRNVLMKRDIPNLTKYQIILARDQFRKNPSPNIVGIQQGIIEGEFALCISLYHGYELLQQMGMRSLYFFLSGIMDGTKGMTRARNELSRNEDFMKLYTHLQSAFAPASTSDASAFQRGNKEKKFVYSHPKLKKLEEVILEHFKSWNAKATTEKKCHESRVMIFSSFRDSVEEIAEMLLQHRPVIRVMTFVGHASGKNTKGFTQKEQLQVVRQFRDGGYNTLVSTCVGEEGLDIGEVDLIICFDAQKSPIRLIQRMGRTGRKRQGRIVVILAEGREERTYNQSQSNKKNIYKAISGNRQVLRLYQGSPRMVPDKINPELHKMYITHGVYEPEKARSVQRRPFSSRGGIKASKSNKDGLLSEEEFNLWSRLYRLGDSDQVKGVALPQSHFPSLQEDRVIQDPTTRIHQLSLSEWSLWQDRPLPTHQVDHSDRCHHFISIMKMIEGMRHEEGECSYELKIRPFLQMEDVCSKYHAPRNGYNNVASVASSAHQKSSFRPSVDAGGSLTVIESEEEHADTVKQRDSKWTKITSLREKPCRAGRKGQTCEHSEGEGEDGDAGSSDADGQSPAEADSQVDPPSGERMADVGGISILGAVTEEDNHPGTLQMECQVTNKSCARYSLDSGYSSFSDEKSVSSNLFLPLEEELFTDRAAEQFYNCRPMTEDVLANVERFLSRSPPSLSGLSDLVYDVTQGCEFDNASCSPYPEHEHSPRPVSPASHSAGNSQQNLESNSAKRISHPTEKYCLPGTTHNKVSDRPSFCESDSEGHNIKYQNSGSNSCAQIQADLENNFVDKNSHDDSEPPVLFTDEDESLLLFEDDFKNIEDGPEELNGASLPPFNSISQPLRVSGKTLTSEMPPVSHFLISDELLLDDDSEPEDQIVCGAKSWKCQEGVEDGQEELRTDGQTFDCSVDLFSVTFDLGFRCSSGSDDEMLAGASDRTRTLGAADVSGRHSDKEIKDAGGASGPLGRAISPIPTETAQWSPWAQNKEYASFHVASSSPVKQRVRSTPLSKSHASSKTGAHMLKTLDSTKEKAGGQGFKMALNPRLGHLGFSVEETKSSDQVFVHQSPRRTEVEHLTSESEDDVFLRKTKKPKRNVLKSPEDQKNNEVDSPIHAVKKPRVLRSELASSDDESENFGRTCPRLEHFKGRNRNIRKGSAAQKNRSQVKTMARRFLDDEAEVSGEDVDCVSADEEDESENEQDSSLLDFVNDRTQLSQAINDSEMRAIYMKSVRSPLMSTKYRMVREKRPNMNIFSQIPEQDENYLEDSFCVDEEESCKSQSSEEEISVDFNLTKDSFTDEDIRYKTRYAVKIKQMNKKQNYTRPRKKLSRIILPDDDSSEEENIPKDREHSVAGGHAAAEHTQQGQLWASGPSGSSVPPQVLSDPSWNQSSRQRLQVQPSITDAVPRTLNVKAQSHNKIKSASPPCTGVESRKEYGNHPVQLKADSQEHSDTSAAPCSTSLLHVAEGHTAPRHLQEGNRACILVDSREITTGLEVISSLRTVHGLQVEICPLNGCDYIVSSRMVVVRRSQSEMLSNTSKNKFIEQMQRLQSMFQRICVIVEKDREKAGDTSKKFRRTKCYDSLLTALVGAGIRILFSSGQEETADLLKELSLVEQRKNAGIHIPAVLNTSKLEALPFYLSIPGISYITALNMCHQFSSVKKMANSSPEEISTCAQVNHQKAEEIYKYIHYIFDMQMLPNDLNQERQKPDTCLTLGVAMKELS.

The residue at position 30 (serine 30) is a Phosphoserine. The region spanning isoleucine 86–lysine 254 is the Helicase ATP-binding domain. Leucine 99–threonine 106 provides a ligand contact to ATP. Positions aspartate 202 to histidine 205 match the DEAH box motif. The Helicase C-terminal domain maps to lysine 437–arginine 612. Disordered regions lie at residues arginine 638–asparagine 657, proline 837–aspartate 886, cysteine 1002–threonine 1049, glycine 1244–proline 1273, alanine 1296–threonine 1319, proline 1369–proline 1441, lysine 1447–valine 1466, asparagine 1615–isoleucine 1700, and alanine 1712–lysine 1732. The segment covering alanine 1018–lysine 1035 has biased composition (polar residues). Basic and acidic residues predominate over residues serine 1249–aspartate 1259. Residues arginine 1370 to serine 1379 show a composition bias toward basic and acidic residues. The segment covering arginine 1388–valine 1397 has biased composition (basic residues). Serine 1637 is modified (phosphoserine). A compositionally biased stretch (low complexity) spans serine 1669–serine 1682. Over residues proline 1684 to isoleucine 1700 the composition is skewed to polar residues. The interval serine 1689–threonine 2009 is interaction with FAAP24.

Belongs to the DEAD box helicase family. DEAH subfamily. FANCM sub-subfamily. As to quaternary structure, component of the Fanconi anemia (FA) core complex, which consists of CENPS, CENPX, FANCA, FANCB, FANCC, FANCE, FANCF, FANCG, FANCL, FANCM, FAAP24 and FAAP100. The FA core complex associates with Bloom syndrome (BLM) complex, which consists of at least BLM, DNA topoisomerase 3-alpha/TOP3A, RMI1/BLAP75, RPA1/RPA70 and RPA2/RPA32. This supercomplex between FA and BLM complexes has been called BRAFT. Forms a discrete complex with CENPS and CENPX, called FANCM-MHF; this interaction stimulates DNA binding and replication fork remodeling by FANCM and stabilizes the binding partners. Forms a heterodimer with FAAP24; this interaction increases FANCM single-stranded DNA-binding activity. In terms of processing, phosphorylated; hyperphosphorylated in response to genotoxic stress.

The protein localises to the nucleus. The enzyme catalyses ATP + H2O = ADP + phosphate + H(+). DNA-dependent ATPase component of the Fanconi anemia (FA) core complex. Required for the normal activation of the FA pathway, leading to monoubiquitination of the FANCI-FANCD2 complex in response to DNA damage, cellular resistance to DNA cross-linking drugs, and prevention of chromosomal breakage. In complex with CENPS and CENPX, binds double-stranded DNA (dsDNA), fork-structured DNA (fsDNA) and Holliday junction substrates. Its ATP-dependent DNA branch migration activity can process branched DNA structures such as a movable replication fork. This activity is strongly stimulated in the presence of CENPS and CENPX. In complex with FAAP24, efficiently binds to single-strand DNA (ssDNA), splayed-arm DNA, and 3'-flap substrates. In vitro, on its own, strongly binds ssDNA oligomers and weakly fsDNA, but does not bind to dsDNA. This chain is Fanconi anemia group M protein homolog (Fancm), found in Mus musculus (Mouse).